A 727-amino-acid chain; its full sequence is Cyclin-T1 (727 aa).

At Ser-117 the chain carries Phosphoserine. Positions 253 to 270 match the Nuclear localization signal, and interaction with Tat-TAR RNA motif; the sequence is KRIRNWRACQAAKKTKAD. A compositionally biased stretch (low complexity) spans 302–322; it reads MSTSSTTSTVPSLPTTEESSS. The disordered stretch occupies residues 302–326; it reads MSTSSTTSTVPSLPTTEESSSNLSG. Lys-343 participates in a covalent cross-link: Glycyl lysine isopeptide (Lys-Gly) (interchain with G-Cter in SUMO2). A coiled-coil region spans residues 386 to 427; sequence SAKVSLKEYRAKHAEELAAQKRQLENMEANVKSQYAYAAQNL. Position 390 is a phosphoserine (Ser-390). Lys-392 bears the N6-acetyllysine mark. Lys-417 participates in a covalent cross-link: Glycyl lysine isopeptide (Lys-Gly) (interchain with G-Cter in SUMO2). ADP-ribosylserine occurs at positions 418, 476, and 477. The interval 482-552 is histidine-rich domain (HRD); it reads IKMRIKVHAA…RPGDPKHSSQ (71 aa). Lys-483 is covalently cross-linked (Glycyl lysine isopeptide (Lys-Gly) (interchain with G-Cter in SUMO2)). The segment covering 486–508 has biased composition (basic and acidic residues); it reads IKVHAAPDKHNSIDDSVTKSREH. Disordered regions lie at residues 486–591 and 692–727; these read IKVH…DHPA and LNPR…PLPK. Residue Lys-487 is modified to N6-(ADP-ribosyl)lysine. The residue at position 489 (His-489) is an ADP-ribosylhistidine. Residues Ser-497 and Ser-501 each carry the phosphoserine modification. A compositionally biased stretch (basic residues) spans 509–532; it reads KEKHKTHPSNHHHHHNHHSHKHSH. ADP-ribosylhistidine is present on His-532. Residues Ser-533, Ser-551, and Ser-554 each carry the ADP-ribosylserine modification. At His-558 the chain carries ADP-ribosylhistidine. Residues 562-572 show a composition bias toward low complexity; it reads SLSSSFSSSSS. Ser-565 is modified (ADP-ribosylserine). A Phosphoserine modification is found at Ser-566. Residues 711 to 727 show a composition bias toward pro residues; the sequence is LPPLPSEPPPPLPPLPK.

The protein belongs to the cyclin family. Cyclin C subfamily. Cyclin-T1 is the predominant cyclin that associates with CDK9 to form a heterodimer called P-TEFb. P-TEFb forms a complex with AFF4/AF5Q31. Component of a complex which is at least composed of HTATSF1/Tat-SF1, P-TEFb complex, RNA pol II, SUPT5H, and NCL/nucleolin. Component of the 7SK snRNP complex at least composed of P-TEFb (composed of CDK9 and CCNT1/cyclin-T1), HEXIM1, HEXIM2, BCDIN3, SART3 proteins and 7SK and U6 snRNAs. Interacts (via central region) with ZMYND8 (via N-terminus); the interaction is direct and the association appears to occur between homodimeric ZMYND8 and the activated form of the P-TEFb complex. Interacts with BRD4, targets chromatin binding. Interacts with JMJD6. Interacts with MDFIC. Interacts with HSF1. Interacts with HTATSF1. Interacts with TBX21. ADP-ribosylation on serine residues by PARP1 in response to DNA damage disrupts the phase separation activity of CCNT1, thereby preventing activation of CDK9.

Its subcellular location is the nucleus. In terms of biological role, regulatory subunit of the cyclin-dependent kinase pair (CDK9/cyclin-T1) complex, also called positive transcription elongation factor B (P-TEFb), which facilitates the transition from abortive to productive elongation by phosphorylating the CTD (C-terminal domain) of the large subunit of RNA polymerase II (RNA Pol II). Required to activate the protein kinase activity of CDK9: acts by mediating formation of liquid-liquid phase separation (LLPS) that enhances binding of P-TEFb to the CTD of RNA Pol II. This chain is Cyclin-T1 (CCNT1), found in Equus caballus (Horse).